The chain runs to 524 residues: Nucleoporin NUP56 (524 aa).

Positions 1-219 (MADDPHNTST…SSMAKFASST (219 aa)) are disordered. Basic and acidic residues-rich tracts occupy residues 28–80 (VKED…EPEK), 114–168 (THDE…KEVE), and 179–199 (SAEK…KVDK). The Nuclear localization signal motif lies at 37-44 (ARRELKQT). The stretch at 111 to 133 (KKRTHDELEQDGKEEEEKKEGEK) forms a coiled coil. Over residues 200–219 (PQTSSSAFANSSMAKFASST) the composition is skewed to polar residues. 7 FG repeats span residues 223–224 (FG), 226–227 (FG), 237–238 (FG), 247–248 (FG), 266–267 (FG), 312–313 (FG), and 328–329 (FG). Disordered regions lie at residues 247–284 (FGSK…QAGG) and 300–371 (GSSA…GEEK). Positions 248–277 (GSKSADASAAPAGPPKLSFGSASAASPFAS) are enriched in low complexity. Acidic residues-rich tracts occupy residues 332-345 (ESDE…EEGE) and 352-362 (GEGEEKEEEEK). The stretch at 345-376 (EENKSENGEGEEKEEEEKEEKASGEEKKKFKL) forms a coiled coil. The RanBD1 domain occupies 377–475 (QKVHIDDGEG…TPILPAMKFQ (99 aa)). Residues 503–524 (SQANATQFSNMVEKIKEKLAAA) are a coiled coil.

The nuclear pore complex (NPC) constitutes the exclusive means of nucleocytoplasmic transport. NPCs allow the passive diffusion of ions and small molecules and the active, nuclear transport receptor-mediated bidirectional transport of macromolecules such as proteins, RNAs, ribonucleoparticles (RNPs), and ribosomal subunits across the nuclear envelope. The 55-60 MDa NPC is composed of at least 28 different subunits: AMO1, ELYS, GLE1, GLE2, MLP1, NDC1, NIC96, NSP1, NUP133, NUP145, NUP152, NUP159, NUP170, NUP188, NUP192, NUP37, NUP49, NUP53, NUP56, NUP57, NUP82, NUP84, NUP85, POM152, POM33, POM34, SEC13 and SEH1. Due to its 8-fold rotational symmetry, all subunits are present with 8 copies or multiples thereof.

Its subcellular location is the nucleus. The protein localises to the nuclear pore complex. It is found in the nucleus membrane. Its function is as follows. Functions as a component of the nuclear pore complex (NPC). NPC components, collectively referred to as nucleoporins (NUPs), can play the role of both NPC structural components and of docking or interaction partners for transiently associated nuclear transport factors. Active directional transport is assured by both, a Phe-Gly (FG) repeat affinity gradient for these transport factors across the NPC and a transport cofactor concentration gradient across the nuclear envelope (GSP1 and GSP2 GTPases associated predominantly with GTP in the nucleus, with GDP in the cytoplasm). The protein is Nucleoporin NUP56 (NUP56) of Chaetomium thermophilum (strain DSM 1495 / CBS 144.50 / IMI 039719) (Thermochaetoides thermophila).